The sequence spans 442 residues: Serine--tRNA ligase (442 aa).

244 to 246 is an L-serine binding site; that stretch reads TAE. Position 275 to 277 (275 to 277) interacts with ATP; sequence RAE. Glu-298 contacts L-serine. 365-368 provides a ligand contact to ATP; it reads EISS. Residue Ser-400 participates in L-serine binding.

Belongs to the class-II aminoacyl-tRNA synthetase family. Type-1 seryl-tRNA synthetase subfamily. As to quaternary structure, homodimer. The tRNA molecule binds across the dimer.

The protein resides in the cytoplasm. The enzyme catalyses tRNA(Ser) + L-serine + ATP = L-seryl-tRNA(Ser) + AMP + diphosphate + H(+). It carries out the reaction tRNA(Sec) + L-serine + ATP = L-seryl-tRNA(Sec) + AMP + diphosphate + H(+). The protein operates within aminoacyl-tRNA biosynthesis; selenocysteinyl-tRNA(Sec) biosynthesis; L-seryl-tRNA(Sec) from L-serine and tRNA(Sec): step 1/1. Functionally, catalyzes the attachment of serine to tRNA(Ser). Is also able to aminoacylate tRNA(Sec) with serine, to form the misacylated tRNA L-seryl-tRNA(Sec), which will be further converted into selenocysteinyl-tRNA(Sec). The protein is Serine--tRNA ligase of Bradyrhizobium sp. (strain BTAi1 / ATCC BAA-1182).